Reading from the N-terminus, the 573-residue chain is Protein FAM200A (573 aa).

A disordered region spans residues 1-51 (MTPESRDTTDLSPGGTQEMEGIVIVKVEEEDEEDHFQKERNKVESSPQVLS). At 1–513 (MTPESRDTTD…DDFPLLSRKS (513 aa)) the chain is on the extracellular side. The chain crosses the membrane as a helical span at residues 514–533 (ILLLLPFTTTYLCELGFSIL). The Cytoplasmic segment spans residues 534–573 (TRLKTKKRNRLNSAPDMRVALSSCVPDWKELMNRQAHPSH).

The protein belongs to the FAM200 family.

It is found in the membrane. In Homo sapiens (Human), this protein is Protein FAM200A (FAM200A).